We begin with the raw amino-acid sequence, 358 residues long: MQKIIHVDMDCFYAAVEMRDFPELRGKPIAVGGRSDRRGVISTCNYEARQFGVRSAMASGYALKLCPDLILVPGRMQVYKEVSSQIRAVFERYTYLIEPLSLDEAYLDVTDSPHCKGSATLIAEAIRADILAETGLTASAGIAPVKFLAKIASDLNKPNGQYVIRPDMINEFVKTLPLIKIPGVGKVTAKKLADLGLHTCSDVQAYPPAQLIERFGKFGTVLIERSKGVDKRGISPNRERKSVGVETTLAKDIHTLEQCRAVMPQLIQELGARVSRSAKDRTIHKQVVKIKFEDFKQTTIEHRSDDISVNLFYQLLEQAMERQHERGIRLLGVSVGLASNSSTTDDSDVDSSQLDLGF.

The region spanning 4 to 185 (IIHVDMDCFY…LPLIKIPGVG (182 aa)) is the UmuC domain. 2 residues coordinate Mg(2+): D8 and D103. Residue E104 is part of the active site.

It belongs to the DNA polymerase type-Y family. Monomer. Requires Mg(2+) as cofactor.

Its subcellular location is the cytoplasm. It carries out the reaction DNA(n) + a 2'-deoxyribonucleoside 5'-triphosphate = DNA(n+1) + diphosphate. Functionally, poorly processive, error-prone DNA polymerase involved in untargeted mutagenesis. Copies undamaged DNA at stalled replication forks, which arise in vivo from mismatched or misaligned primer ends. These misaligned primers can be extended by PolIV. Exhibits no 3'-5' exonuclease (proofreading) activity. May be involved in translesional synthesis, in conjunction with the beta clamp from PolIII. In Shewanella pealeana (strain ATCC 700345 / ANG-SQ1), this protein is DNA polymerase IV.